The chain runs to 254 residues: Serotonin N-acetyltransferase 1, chloroplastic (254 aa).

Residues 1 to 74 constitute a chloroplast transit peptide; it reads MAPAASASAS…LRSGFLKSNN (74 aa). The N-acetyltransferase domain occupies 111 to 254; it reads IIFSSAGDVN…IKGMFWYPRF (144 aa).

Belongs to the acetyltransferase family. Expressed in roots and shoots.

It localises to the plastid. The protein localises to the chloroplast. Its subcellular location is the nucleus. The catalysed reaction is serotonin + acetyl-CoA = N-acetylserotonin + CoA + H(+). It carries out the reaction tyramine + acetyl-CoA = N-acetyltyramine + CoA + H(+). It catalyses the reaction tryptamine + acetyl-CoA = N-acetyltryptamine + CoA + H(+). The enzyme catalyses 5-methoxytryptamine + acetyl-CoA = melatonin + CoA + H(+). It functions in the pathway aromatic compound metabolism; melatonin biosynthesis; melatonin from serotonin: step 1/2. Catalyzes the N-acetylation of serotonin into N-acetylserotonin, the penultimate step in the synthesis of melatonin. Catalyzes in vitro the N-acetylation of tryptamine to produce N-acetyltryptamine, 5-methoxytryptamine to produce melatonin and tyramine to produce N-acetyltyramine. The sequence is that of Serotonin N-acetyltransferase 1, chloroplastic from Oryza sativa subsp. japonica (Rice).